A 179-amino-acid polypeptide reads, in one-letter code: NADH dehydrogenase [ubiquinone] 1 beta subcomplex subunit 9 (179 aa).

A2 carries the post-translational modification N-acetylalanine. Residue S85 is modified to Phosphoserine. Positions 136–162 (EVKQLQEETPPGGPLTEALPPARKEGD) are disordered.

Belongs to the complex I LYR family. In terms of assembly, mammalian complex I is composed of 45 different subunits.

Its subcellular location is the mitochondrion inner membrane. In terms of biological role, accessory subunit of the mitochondrial membrane respiratory chain NADH dehydrogenase (Complex I), that is believed to be not involved in catalysis. Complex I functions in the transfer of electrons from NADH to the respiratory chain. The immediate electron acceptor for the enzyme is believed to be ubiquinone. The protein is NADH dehydrogenase [ubiquinone] 1 beta subcomplex subunit 9 (NDUFB9) of Pongo abelii (Sumatran orangutan).